Reading from the N-terminus, the 438-residue chain is Enolase (438 aa).

Substrate-binding residues include His-159 and Glu-168. Glu-211 (proton donor) is an active-site residue. Positions 246, 297, and 322 each coordinate Mg(2+). Substrate contacts are provided by Glu-297 and Asp-322. Lys-347 acts as the Proton acceptor in catalysis. Substrate is bound by residues 374 to 377 (SHRS) and Lys-398.

This sequence belongs to the enolase family. In terms of assembly, homodimer. Mg(2+) serves as cofactor.

It is found in the cytoplasm. The catalysed reaction is (2R)-2-phosphoglycerate = phosphoenolpyruvate + H2O. It participates in carbohydrate degradation; glycolysis; pyruvate from D-glyceraldehyde 3-phosphate: step 4/5. This Cryphonectria parasitica (Chestnut blight fungus) protein is Enolase (ENO1).